Consider the following 320-residue polypeptide: Methyltransferase gedG (320 aa).

The tract at residues 61–154 (DAGAGNGVYS…QLRPGGTFAC (94 aa)) is methyltransferase domain. The disordered stretch occupies residues 231–252 (GLLPPERRGEVTEPDHEGPHDQ). Residues 235 to 252 (PERRGEVTEPDHEGPHDQ) are compositionally biased toward basic and acidic residues.

It belongs to the methyltransferase superfamily.

It participates in secondary metabolite biosynthesis. In terms of biological role, methyltransferase; part of the gene cluster that mediates the biosynthesis of geodin, an intermediate in the biosynthesis of other natural products. The pathway begins with the synthesis of atrochrysone thioester by the polyketide synthase (PKS) gedC. The atrochrysone carboxyl ACP thioesterase gedB then breaks the thioester bond and releases the atrochrysone carboxylic acid from gedC. The atrochrysone carboxylic acid is then converted to atrochrysone which is further transformed into emodinanthrone. The next step is performed by the emodinanthrone oxygenase gedH that catalyzes the oxidation of emodinanthrone to emodin. Emodin O-methyltransferase encoded probably by gedA then catalyzes methylation of the 8-hydroxy group of emodin to form questin. Ring cleavage of questin by questin oxidase gedK leads to desmethylsulochrin via several intermediates including questin epoxide. Another methylation step probably catalyzed by methyltransferase gedG leads to the formation of sulochrin which is further converted to dihydrogeodin by the sulochrin halogenase gedL. Finally, the dihydrogeodin oxidase gedJ catalyzes the stereospecific phenol oxidative coupling reaction converting dihydrogeodin to geodin. This Aspergillus terreus (strain NIH 2624 / FGSC A1156) protein is Methyltransferase gedG.